The chain runs to 512 residues: 2-isopropylmalate synthase (512 aa).

A Pyruvate carboxyltransferase domain is found at 4-266 (IQFFDTTLRD…ETNIVLNQFK (263 aa)). Residues aspartate 13, histidine 201, histidine 203, and asparagine 237 each coordinate Mn(2+). Residues 390–512 (ELKHLQVQYV…SKQADFEEVK (123 aa)) are regulatory domain.

Belongs to the alpha-IPM synthase/homocitrate synthase family. LeuA type 1 subfamily. As to quaternary structure, homodimer. Requires Mn(2+) as cofactor.

It localises to the cytoplasm. The enzyme catalyses 3-methyl-2-oxobutanoate + acetyl-CoA + H2O = (2S)-2-isopropylmalate + CoA + H(+). The protein operates within amino-acid biosynthesis; L-leucine biosynthesis; L-leucine from 3-methyl-2-oxobutanoate: step 1/4. Its function is as follows. Catalyzes the condensation of the acetyl group of acetyl-CoA with 3-methyl-2-oxobutanoate (2-ketoisovalerate) to form 3-carboxy-3-hydroxy-4-methylpentanoate (2-isopropylmalate). This chain is 2-isopropylmalate synthase, found in Listeria monocytogenes serotype 4b (strain CLIP80459).